The sequence spans 243 residues: Orotidine 5'-phosphate decarboxylase (243 aa).

Residues Asp18, Lys39, 66 to 75 (DLKFHDIPTT), Thr130, Arg192, Gln201, Gly221, and Arg222 contribute to the substrate site. The Proton donor role is filled by Lys68.

It belongs to the OMP decarboxylase family. Type 1 subfamily. As to quaternary structure, homodimer.

The enzyme catalyses orotidine 5'-phosphate + H(+) = UMP + CO2. It functions in the pathway pyrimidine metabolism; UMP biosynthesis via de novo pathway; UMP from orotate: step 2/2. Functionally, catalyzes the decarboxylation of orotidine 5'-monophosphate (OMP) to uridine 5'-monophosphate (UMP). In Synechococcus sp. (strain CC9311), this protein is Orotidine 5'-phosphate decarboxylase.